Here is a 121-residue protein sequence, read N- to C-terminus: Oxalate-binding protein (121 aa).

Residues 49 to 117 (RMKLPPGSSV…GNTDLEFLAV (69 aa)) enclose the Cupin type-2 domain. Residues His-61, His-63, and Glu-68 each coordinate Mn(2+). Tyr-70 serves as a coordination point for oxalate. Position 102 (His-102) interacts with Mn(2+).

Homodimer.

In terms of biological role, binds oxalate. This Thermotoga maritima (strain ATCC 43589 / DSM 3109 / JCM 10099 / NBRC 100826 / MSB8) protein is Oxalate-binding protein.